Reading from the N-terminus, the 202-residue chain is Holliday junction branch migration complex subunit RuvA (202 aa).

The interval 1-64 is domain I; the sequence is MIGRLRGSLA…EDAHLLYGFY (64 aa). The domain II stretch occupies residues 65 to 143; sequence EKRERELFRE…AWESLPGTFT (79 aa). The segment at 144-153 is flexible linker; that stretch reads LVSNGPNQAE. The segment at 154-202 is domain III; it reads PVASAESDAVSALISLGYKPQEASKAVSAIKEKDLSSADLIRRALKGMG.

The protein belongs to the RuvA family. As to quaternary structure, homotetramer. Forms an RuvA(8)-RuvB(12)-Holliday junction (HJ) complex. HJ DNA is sandwiched between 2 RuvA tetramers; dsDNA enters through RuvA and exits via RuvB. An RuvB hexamer assembles on each DNA strand where it exits the tetramer. Each RuvB hexamer is contacted by two RuvA subunits (via domain III) on 2 adjacent RuvB subunits; this complex drives branch migration. In the full resolvosome a probable DNA-RuvA(4)-RuvB(12)-RuvC(2) complex forms which resolves the HJ.

The protein localises to the cytoplasm. The RuvA-RuvB-RuvC complex processes Holliday junction (HJ) DNA during genetic recombination and DNA repair, while the RuvA-RuvB complex plays an important role in the rescue of blocked DNA replication forks via replication fork reversal (RFR). RuvA specifically binds to HJ cruciform DNA, conferring on it an open structure. The RuvB hexamer acts as an ATP-dependent pump, pulling dsDNA into and through the RuvAB complex. HJ branch migration allows RuvC to scan DNA until it finds its consensus sequence, where it cleaves and resolves the cruciform DNA. The chain is Holliday junction branch migration complex subunit RuvA from Pseudomonas savastanoi pv. phaseolicola (strain 1448A / Race 6) (Pseudomonas syringae pv. phaseolicola (strain 1448A / Race 6)).